Here is a 185-residue protein sequence, read N- to C-terminus: Ribosome-recycling factor (185 aa).

This sequence belongs to the RRF family.

The protein resides in the cytoplasm. Its function is as follows. Responsible for the release of ribosomes from messenger RNA at the termination of protein biosynthesis. May increase the efficiency of translation by recycling ribosomes from one round of translation to another. In Chromohalobacter salexigens (strain ATCC BAA-138 / DSM 3043 / CIP 106854 / NCIMB 13768 / 1H11), this protein is Ribosome-recycling factor.